The chain runs to 435 residues: Envelope glycoprotein M (435 aa).

The Intravirion portion of the chain corresponds to 1–36; that stretch reads MGTQKKGPRSEKVSPYDTTTPEVEALDHQMDTLNWR. Residues 37 to 57 traverse the membrane as a helical segment; that stretch reads IWIIQVMMFTLGAVMLLATLI. The Virion surface portion of the chain corresponds to 58–111; that stretch reads AASSEYTGIPCFYAAVVDYELFNATLDGGVWSGNRGGYSAPVLFLEPHSVVAFT. Residues 112 to 132 traverse the membrane as a helical segment; the sequence is YYTALTAMAMAVYTLITAAII. Residues 133-155 lie on the Intravirion side of the membrane; that stretch reads HRETKNQRVRQSSGVAWLVVDPT. Residues 156–176 traverse the membrane as a helical segment; sequence TLFWGLLSLWLLNAVVLLLAY. Residues 177–178 are Virion surface-facing; the sequence is KQ. Residues 179 to 199 traverse the membrane as a helical segment; that stretch reads IGVAATLYLGHFATSVIFTTY. Topologically, residues 200–233 are intravirion; sequence FCGRGKLDETNIKAVANLRQQSVFLYRLAGPTRA. A helical transmembrane segment spans residues 234 to 254; it reads VFVNLMAALMAICILFVSLML. Residues 255-265 are Virion surface-facing; it reads ELVVANHLHTG. A helical transmembrane segment spans residues 266–288; it reads LWSSVSVAMSTFSTLSVVYLIVS. Residues 289-294 lie on the Intravirion side of the membrane; that stretch reads ELILAH. Residues 295–317 traverse the membrane as a helical segment; the sequence is YIHVLIGPSLGTLVACATLGTAA. The Virion surface segment spans residues 318 to 334; sequence HSYMDRLYDPISVQSPR. The helical transmembrane segment at 335–355 threads the bilayer; sequence LIPTTRGTLACLAVFSVVMLL. At 356 to 435 the chain is on the intravirion side; it reads LRLMRAYVYH…LYERSNSGWE (80 aa).

This sequence belongs to the herpesviridae glycoprotein M family. Interacts (via N-terminus) with gN (via N-terminus). The gM-gN heterodimer forms the gCII complex.

The protein resides in the virion membrane. It is found in the host Golgi apparatus. Its subcellular location is the host trans-Golgi network. The protein localises to the host endosome membrane. It localises to the host nucleus inner membrane. Its function is as follows. Envelope glycoprotein important for virion assembly and egress. Plays a role in the correct incorporation of gH-gL into virion membrane. Directs the glycoprotein N (gN) to the host trans-Golgi network. This is Envelope glycoprotein M from Homo sapiens (Human).